Reading from the N-terminus, the 504-residue chain is Tyrosine-protein phosphatase non-receptor type substrate 1 (504 aa).

The signal sequence occupies residues 1 to 30 (MEPAGPAPGRLGPLLCLLLAASCAWSGVAG). The Extracellular portion of the chain corresponds to 31 to 373 (EEELQVIQPD…NTGSNERNIY (343 aa)). The region spanning 32-137 (EELQVIQPDK…SPDDVEFKSG (106 aa)) is the Ig-like V-type domain. 2 disulfide bridges follow: C55-C121 and C170-C228. 2 Ig-like C1-type domains span residues 148–247 (PSAP…ANLS) and 254–348 (PTLE…HDLK). N-linked (GlcNAc...) asparagine glycosylation is found at N245, N270, N292, and N319. C273 and C331 are joined by a disulfide. The segment covering 336–355 (DGQPAVSKSHDLKVSAHPKE) has biased composition (basic and acidic residues). The tract at residues 336-364 (DGQPAVSKSHDLKVSAHPKEQGSNTAAEN) is disordered. Residues 374-394 (IVVGVVCTLLVALLMAALYLV) traverse the membrane as a helical segment. Residues 395–504 (RIRQKKAQGS…EYASVQVPRK (110 aa)) lie on the Cytoplasmic side of the membrane. The segment at 402-504 (QGSTSSTRLH…EYASVQVPRK (103 aa)) is disordered. Over residues 409–421 (RLHEPEKNAREIT) the composition is skewed to basic and acidic residues. At Y429 the chain carries Phosphotyrosine; by Tyr-kinases. The SH2-binding signature appears at 429–432 (YADL). The SH3-binding signature appears at 439–444 (KPAPQA). Polar residues predominate over residues 446 to 467 (EPNNHTEYASIQTSPQPASEDT). Residues Y453 and Y470 each carry the phosphotyrosine; by Tyr-kinases modification. 3 short sequence motifs (SH2-binding) span residues 453 to 456 (YASI), 470 to 473 (YADL), and 496 to 499 (YASV). Residue Y496 is modified to Phosphotyrosine.

Binds PTPN11 when tyrosine-phosphorylated, except in macrophages, where it primarily binds PTPN6. Binds GRB2 in vitro. Binds FGR. Binds JAK2 irrespective of its phosphorylation status and forms a stable complex. Binds SCAP1 and/or SCAP2. The resulting complex recruits FYB1. Binds PTK2B. Interacts with TRIM2. N-glycosylated. In terms of processing, phosphorylated on tyrosine residues in response to stimulation with EGF, growth hormone, insulin and PDGF. Dephosphorylated by PTPN11. As to expression, ubiquitous. Highly expressed in brain. Detected on myeloid cells, but not T-cells. Detected at lower levels in heart, placenta, lung, testis, ovary, colon, liver, small intestine, prostate, spleen, kidney, skeletal muscle and pancreas.

The protein resides in the membrane. Functionally, immunoglobulin-like cell surface receptor for CD47. Acts as docking protein and induces translocation of PTPN6, PTPN11 and other binding partners from the cytosol to the plasma membrane. Supports adhesion of cerebellar neurons, neurite outgrowth and glial cell attachment. May play a key role in intracellular signaling during synaptogenesis and in synaptic function. Involved in the negative regulation of receptor tyrosine kinase-coupled cellular responses induced by cell adhesion, growth factors or insulin. Mediates negative regulation of phagocytosis, mast cell activation and dendritic cell activation. CD47 binding prevents maturation of immature dendritic cells and inhibits cytokine production by mature dendritic cells. Plays a role in antiviral immunity and limits new world arenavirus infection by decreasing virus internalization. Receptor for THBS1. Interaction with THBS1 stimulates phosphorylation of SIRPA. In response to THBS1, involved in ROS signaling in non-phagocytic cells, stimulating NADPH oxidase-derived ROS production. This is Tyrosine-protein phosphatase non-receptor type substrate 1 (SIRPA) from Homo sapiens (Human).